We begin with the raw amino-acid sequence, 353 residues long: MDDKTSKAAAAEKAKALAAALSQIEKQFGKGSIMRYGDNEVEHDIQVVSTGSLGLDIALGVGGLPRGRVIEVYGPESSGKTTLTLQVIAEMQKLGGTCAFVDAEHALDVQYASKLGVNLTDLLISQPDTGEQALEITDALVRSGSVDLIVIDSVAALVPKAEIEGEMGDSLPGLQARLMSQALRKLTATIKRTNCMVIFINQIRMKIGVMFGNPETTTGGNALKFYSSVRLDIRRIGAIKKGDEVVGNETRVKVVKNKVAPPFKQAEFDIMYGSGISREGEIIDLGVQANVVDKSGAWYSYSGNRIGQGKDNVREYLKEHKEMAIEIENKVRENQGIVSRAATFPASEAEDGE.

74–81 (GPESSGKT) is an ATP binding site.

The protein belongs to the RecA family.

Its subcellular location is the cytoplasm. In terms of biological role, can catalyze the hydrolysis of ATP in the presence of single-stranded DNA, the ATP-dependent uptake of single-stranded DNA by duplex DNA, and the ATP-dependent hybridization of homologous single-stranded DNAs. It interacts with LexA causing its activation and leading to its autocatalytic cleavage. This chain is Protein RecA, found in Bordetella bronchiseptica (strain ATCC BAA-588 / NCTC 13252 / RB50) (Alcaligenes bronchisepticus).